Reading from the N-terminus, the 760-residue chain is Formate acetyltransferase 1 (760 aa).

One can recognise a PFL domain in the interval 3-625 (ELNEKLATAW…KTGNTPDGRR (623 aa)). Lys-63 is subject to N6-acetyllysine; alternate. An N6-succinyllysine; alternate modification is found at Lys-63. Lys-107 is subject to N6-succinyllysine. At Lys-117 the chain carries N6-acetyllysine; alternate. Lys-117 bears the N6-succinyllysine; alternate mark. Position 124 is an N6-succinyllysine (Lys-124). Lys-195 carries the post-translational modification N6-acetyllysine; alternate. Lys-195 is subject to N6-succinyllysine; alternate. Catalysis depends on Cys-419, which acts as the S-acetylcysteine intermediate. Catalysis depends on Cys-420, which acts as the Cysteine radical intermediate. Lys-454 bears the N6-acetyllysine; alternate mark. Lys-454 is subject to N6-succinyllysine; alternate. Lys-467 carries the N6-succinyllysine modification. N6-acetyllysine occurs at positions 541 and 591. The 129-residue stretch at 632–760 (PGANPMHGRD…VITRTFTQSM (129 aa)) folds into the Glycine radical domain. The residue at position 654 (Lys-654) is an N6-succinyllysine. Gly-735 carries the glycine radical modification.

The protein belongs to the glycyl radical enzyme (GRE) family. PFL subfamily. As to quaternary structure, homodimer. Interacts specifically with FocA.

The protein resides in the cytoplasm. It catalyses the reaction formate + acetyl-CoA = pyruvate + CoA. Its pathway is fermentation; pyruvate fermentation; formate from pyruvate: step 1/1. Catalyzes the conversion of pyruvate to formate and acetyl-CoA. In addition, may be involved in the control of the activity of the formate channel FocA, via direct interaction with FocA. The chain is Formate acetyltransferase 1 (pflB) from Escherichia coli (strain K12).